A 297-amino-acid polypeptide reads, in one-letter code: Homoserine kinase (297 aa).

82 to 92 (PVSRGLGSSAA) is an ATP binding site.

Belongs to the GHMP kinase family. Homoserine kinase subfamily.

The protein localises to the cytoplasm. It carries out the reaction L-homoserine + ATP = O-phospho-L-homoserine + ADP + H(+). Its pathway is amino-acid biosynthesis; L-threonine biosynthesis; L-threonine from L-aspartate: step 4/5. Catalyzes the ATP-dependent phosphorylation of L-homoserine to L-homoserine phosphate. The protein is Homoserine kinase of Clostridium botulinum (strain ATCC 19397 / Type A).